Reading from the N-terminus, the 246-residue chain is MASNTLMSCGIPAVCPSFLSSTKSKFAAAMPVYVGATNFMSRFSMSADWMPGQPRPSYLDGSAPGDFGFDSLGLGEVPANLERYKESELIHCRWAMLAVPGIIVPEALGLGNWVKAQEWAAIPGGQATYLGQPVPWGTLPTILAIEFLAIAFVEHQRSMEKDSEKKKYPGGAFDPLGYSKDPAKFEELKVKEIKNGRLALLAIVGFCVQQSAYLGTGPLENLATHLADPWHNNIGDVIIPKGIFPN.

A chloroplast-targeting transit peptide spans 1–45 (MASNTLMSCGIPAVCPSFLSSTKSKFAAAMPVYVGATNFMSRFSM). Trp49 is a binding site for chlorophyll b. Positions 69, 88, and 91 each coordinate chlorophyll a. Arg93 serves as a coordination point for chlorophyll b. Residues 94–114 (WAMLAVPGIIVPEALGLGNWV) form a helical membrane-spanning segment. Position 130 (Leu130) interacts with chlorophyll a. A helical membrane pass occupies residues 133 to 153 (PVPWGTLPTILAIEFLAIAFV). Chlorophyll b is bound by residues Val134, Glu154, and Arg157. Residues Lys191, Glu192, Asn195, Arg197, Gln209, and His225 each coordinate chlorophyll a.

Belongs to the light-harvesting chlorophyll a/b-binding (LHC) protein family. The LHC complex consists of chlorophyll a-b binding proteins. Binds at least 14 chlorophylls (8 Chl-a and 6 Chl-b) and carotenoids such as lutein and neoxanthin. serves as cofactor. Post-translationally, photoregulated by reversible phosphorylation of its threonine residues.

It localises to the plastid. Its subcellular location is the chloroplast thylakoid membrane. Functionally, the light-harvesting complex (LHC) functions as a light receptor, it captures and delivers excitation energy to photosystems with which it is closely associated. This chain is Chlorophyll a-b binding protein 6A, chloroplastic (CAB6A), found in Solanum lycopersicum (Tomato).